The primary structure comprises 447 residues: Adenylosuccinate synthetase (447 aa).

Residues 35–41 (GDEGKGK) and 63–65 (GHT) contribute to the GTP site. The active-site Proton acceptor is the aspartate 36. Positions 36 and 63 each coordinate Mg(2+). IMP-binding positions include 36-39 (DEGK), 61-64 (NAGH), threonine 153, arginine 167, asparagine 245, threonine 260, and arginine 324. Histidine 64 acts as the Proton donor in catalysis. Residue 320-326 (VTTKRKR) participates in substrate binding. GTP-binding positions include arginine 326, 352–354 (KLD), and 435–437 (GVG).

Belongs to the adenylosuccinate synthetase family. Homodimer. It depends on Mg(2+) as a cofactor.

It localises to the cytoplasm. The enzyme catalyses IMP + L-aspartate + GTP = N(6)-(1,2-dicarboxyethyl)-AMP + GDP + phosphate + 2 H(+). The protein operates within purine metabolism; AMP biosynthesis via de novo pathway; AMP from IMP: step 1/2. Its function is as follows. Plays an important role in the de novo pathway and in the salvage pathway of purine nucleotide biosynthesis. Catalyzes the first committed step in the biosynthesis of AMP from IMP. Plays a role in the regulation of adult life span. This chain is Adenylosuccinate synthetase, found in Drosophila melanogaster (Fruit fly).